Here is a 219-residue protein sequence, read N- to C-terminus: Swarming motility regulation protein RssB (219 aa).

In terms of domain architecture, Response regulatory spans 2-116; the sequence is NILLVEDDLQ…ELISRVKAVN (115 aa). D51 carries the 4-aspartylphosphate modification. A DNA-binding region (ompR/PhoB-type) is located at residues 124–218; the sequence is SQTWSLGALY…VRGIGYLLKK (95 aa).

Its subcellular location is the cytoplasm. Functionally, member of the two-component regulatory system RssA/RssB involved in regulation of swarming motility which has been shown to be inhibited by saturated fatty acids. RssA/RssB regulates cellular fatty acid composition, hemolysin production and cell surface topography. RssA/RssB negatively regulates the activity of SlhBA. It can also act as a negative regulator for the control of the swarming initiation. RssB binds its own promoter. This Serratia marcescens protein is Swarming motility regulation protein RssB (rssB).